The primary structure comprises 569 residues: Proline--tRNA ligase (569 aa).

It belongs to the class-II aminoacyl-tRNA synthetase family. ProS type 1 subfamily. As to quaternary structure, homodimer.

Its subcellular location is the cytoplasm. The enzyme catalyses tRNA(Pro) + L-proline + ATP = L-prolyl-tRNA(Pro) + AMP + diphosphate. Its function is as follows. Catalyzes the attachment of proline to tRNA(Pro) in a two-step reaction: proline is first activated by ATP to form Pro-AMP and then transferred to the acceptor end of tRNA(Pro). As ProRS can inadvertently accommodate and process non-cognate amino acids such as alanine and cysteine, to avoid such errors it has two additional distinct editing activities against alanine. One activity is designated as 'pretransfer' editing and involves the tRNA(Pro)-independent hydrolysis of activated Ala-AMP. The other activity is designated 'posttransfer' editing and involves deacylation of mischarged Ala-tRNA(Pro). The misacylated Cys-tRNA(Pro) is not edited by ProRS. This chain is Proline--tRNA ligase, found in Dehalococcoides mccartyi (strain ATCC BAA-2100 / JCM 16839 / KCTC 5957 / BAV1).